The following is a 229-amino-acid chain: Cytidylate kinase (229 aa).

10–18 (GPAGSGKST) provides a ligand contact to ATP.

Belongs to the cytidylate kinase family. Type 1 subfamily.

Its subcellular location is the cytoplasm. The enzyme catalyses CMP + ATP = CDP + ADP. It catalyses the reaction dCMP + ATP = dCDP + ADP. This chain is Cytidylate kinase, found in Leptospira interrogans serogroup Icterohaemorrhagiae serovar Lai (strain 56601).